Reading from the N-terminus, the 176-residue chain is Skp1-related protein (176 aa).

Belongs to the SKP1 family. As to quaternary structure, probable component of the SCF(sel-10) E3 ubiquitin-protein ligase complex containing F-box domain-containing protein sel-10 as the substrate recognition component. Interacts with cul-1. May interact with the F-box protein mec-15. Interacts with dre-1. Interacts with syg-1. Interacts with sel-10. In terms of tissue distribution, ubiquitously expressed in the adult.

In terms of biological role, probable essential component of SCF (SKP1-CUL1-F-box protein) E3 ubiquitin-protein ligase complexes, which mediate the ubiquitination and subsequent proteasomal degradation of target proteins. Regulates cell proliferation during embryonic and larval development. Involved in synapse elimination in early synapse development. May negatively regulate the apoptotic activity of cep-1 in response to genotoxic stress. Plays a role in sex determination. The sequence is that of Skp1-related protein from Caenorhabditis elegans.